Here is a 310-residue protein sequence, read N- to C-terminus: Malate dehydrogenase (310 aa).

NAD(+)-binding positions include 7 to 13 and Asp-34; that span reads GAAGGIG. Substrate-binding residues include Arg-81 and Arg-87. Residues Asn-94 and 117 to 119 contribute to the NAD(+) site; that span reads ITN. Substrate-binding residues include Asn-119 and Arg-153. The active-site Proton acceptor is the His-177. Met-227 lines the NAD(+) pocket.

Belongs to the LDH/MDH superfamily. MDH type 1 family. As to quaternary structure, homodimer.

It carries out the reaction (S)-malate + NAD(+) = oxaloacetate + NADH + H(+). Its function is as follows. Catalyzes the reversible oxidation of malate to oxaloacetate. The sequence is that of Malate dehydrogenase from Pseudoalteromonas translucida (strain TAC 125).